An 85-amino-acid chain; its full sequence is Large ribosomal subunit protein bL27 (85 aa).

The protein belongs to the bacterial ribosomal protein bL27 family.

The protein is Large ribosomal subunit protein bL27 of Persephonella marina (strain DSM 14350 / EX-H1).